The chain runs to 96 residues: uncharacterized protein (96 aa).

Residues Glu9–Arg86 are a coiled coil.

Belongs to the WXG100 family. sagEsxA-like subfamily.

This is an uncharacterized protein from Clostridium acetobutylicum (strain ATCC 824 / DSM 792 / JCM 1419 / IAM 19013 / LMG 5710 / NBRC 13948 / NRRL B-527 / VKM B-1787 / 2291 / W).